A 202-amino-acid chain; its full sequence is LexA repressor (202 aa).

The segment at residues 28–48 (IAEIARAIGVSSPHGVREQLR) is a DNA-binding region (H-T-H motif). Active-site for autocatalytic cleavage activity residues include Ser120 and Lys157.

Belongs to the peptidase S24 family. As to quaternary structure, homodimer.

The enzyme catalyses Hydrolysis of Ala-|-Gly bond in repressor LexA.. Functionally, represses a number of genes involved in the response to DNA damage (SOS response), including recA and lexA. In the presence of single-stranded DNA, RecA interacts with LexA causing an autocatalytic cleavage which disrupts the DNA-binding part of LexA, leading to derepression of the SOS regulon and eventually DNA repair. This is LexA repressor from Methylococcus capsulatus (strain ATCC 33009 / NCIMB 11132 / Bath).